The sequence spans 416 residues: MKFIIKSISKNSGRLGQLRIKDSKELQTPLLLQTTKGGSIPYLSADVFGMVTQEQQVLQLTLCTMDQMAESLAQWNRSLGAYVGYPEYNTLLLLRDPCEATPTGGNDRDVVPLFTRRGKESLTAERYLQLVSSFAPDVYQGLCDADTNPESTKKRVQKSVDRTERFMEHCYKQHRELDRLKDSTLLAPIVGGYNTYARTQSIKHAREQPKGSYGGYIFEGFHTNGLPATRLSPSQLLPIVEHCVQQIEEELPRLMPGPLTPVLMLELIRLGIDIFDTSYAYCAAVNYKALTFSYTIDKEEHSAFLDVTDEAIREEFKPMLEGCKCLACQKHTRAYVHHLYKTNELLGPILLMIHNLHHYMGFFDVIRQSIAMDQLSLLLDYVRRQNMPNDVNYCIEPNTKVVGKAAMGKGFITAAN.

4 residues coordinate Zn(2+): Cys-323, Cys-325, Cys-328, and His-354.

It belongs to the queuine tRNA-ribosyltransferase family. QTRT2 subfamily. In terms of assembly, heterodimer of a catalytic subunit and an accessory subunit. Zn(2+) serves as cofactor.

It is found in the cytoplasm. Its function is as follows. Non-catalytic subunit of the queuine tRNA-ribosyltransferase (TGT) that catalyzes the base-exchange of a guanine (G) residue with queuine (Q) at position 34 (anticodon wobble position) in tRNAs with GU(N) anticodons (tRNA-Asp, -Asn, -His and -Tyr), resulting in the hypermodified nucleoside queuosine (7-(((4,5-cis-dihydroxy-2-cyclopenten-1-yl)amino)methyl)-7-deazaguanosine). The protein is Queuine tRNA-ribosyltransferase accessory subunit 2 of Drosophila mojavensis (Fruit fly).